We begin with the raw amino-acid sequence, 397 residues long: Leucine carboxyl methyltransferase 1 (397 aa).

The disordered stretch occupies residues 17-61 (AIQTPPPTDPNAAPAHRPAPRPALGRCRPPHRRRRRLRPPVRPPL). A compositionally biased stretch (low complexity) spans 26–43 (PNAAPAHRPAPRPALGRC). Positions 44–55 (RPPHRRRRRLRP) are enriched in basic residues. Residues Arg-119, Gly-142, Asp-168, 224–225 (DL), and Glu-259 contribute to the S-adenosyl-L-methionine site.

It belongs to the methyltransferase superfamily. LCMT family.

The enzyme catalyses [phosphatase 2A protein]-C-terminal L-leucine + S-adenosyl-L-methionine = [phosphatase 2A protein]-C-terminal L-leucine methyl ester + S-adenosyl-L-homocysteine. Methylates the carboxyl group of the C-terminal leucine residue of protein phosphatase 2A catalytic subunits to form alpha-leucine ester residues. This Cryptococcus neoformans var. neoformans serotype D (strain B-3501A) (Filobasidiella neoformans) protein is Leucine carboxyl methyltransferase 1 (PPM1).